The sequence spans 636 residues: C-terminal binding protein AN (636 aa).

The interval 1–21 (MSKIRSSATMPHRDQPSPASP) is disordered. NAD(+) is bound by residues Ser91, 147–148 (WL), 169–174 (VGRSVS), Asp193, 231–237 (CALTNDT), 258–260 (TGS), Asp284, and 307–311 (RSADY). The segment at 341-489 (VSDEEVEESE…PLEVMQESSP (149 aa)) is disordered. A compositionally biased stretch (acidic residues) spans 342-357 (SDEEVEESEASEEEEQ). Positions 369–384 (ESTSRQQGESTLTSTE) are enriched in polar residues. Over residues 385-395 (IVRREASELKE) the composition is skewed to basic and acidic residues. The segment covering 398–409 (SPGQQHVSQNTA) has biased composition (polar residues). The segment covering 417–429 (SRSGKKAKKRHSQ) has biased composition (basic residues). Positions 430–445 (QKYMQKTDGSSGLNEE) are enriched in polar residues. Over residues 470–480 (SPEDSRSRKTP) the composition is skewed to basic and acidic residues.

The protein belongs to the D-isomer specific 2-hydroxyacid dehydrogenase family. Plant AN subfamily. As to quaternary structure, homodimer. Interacts with KCBP and SUB (via intra-cellular domain); AN is not required for the correct subcellular localization and recycling of SUB. Binds to SOKs proteins polymers (e.g. SOK1, SOK2, SOK3 and SOK4). Interacts with IPGA1 on microtubule upon mechanical stress to regulate microtubule organization. NAD(+) serves as cofactor. Expressed in cotyledons, leaves, roots, stems and floral buds.

The protein localises to the cytoplasm. It localises to the golgi apparatus. Its subcellular location is the trans-Golgi network. It is found in the cytoskeleton. Its function is as follows. Involved in controlling the equilibrium between tubular and stacked structures in the Golgi complex. Required for cortical microtubules (MTs) arrangement that confers cell shape. Cooperatively with IPGA1, negatively regulates cortical microtubules (CMTs) organization in response to mechanical stress and modulates pavement cells morphogenesis leading to puzzle shape, probably in an AAA1/KTN1-dependent manner. Regulates the width of leaves by controlling the polar elongation of leaf cells. Involved in the regulation of trichome branching. Seems to not be able to regulate gene transcription. Regulates epidermal cell divisions and elongation in a non-cell-autonomous manner (regulated by subepidermal cells), but regulates epidermal cell polarity, shape, trichome branching and elongation in a cell-autonomous manner. Negatively regulates growth in the petiole elongation. Prevents lipid peroxidation as a result of abiotic stress response. Is involved in the SUB-dependent signaling mechanism and may act in a membrane trafficking event around the trans-Golgi network. This is C-terminal binding protein AN from Arabidopsis thaliana (Mouse-ear cress).